Here is a 405-residue protein sequence, read N- to C-terminus: Phosphatidylinositol 5-phosphate 4-kinase type-2 alpha (405 aa).

Position 2 is an N-acetylalanine (alanine 2). Threonine 3 bears the Phosphothreonine mark. Serine 14 carries the phosphoserine modification. Residues 33–405 (ASDPLLSVLM…RFLDFIGHIL (373 aa)) enclose the PIPK domain. The segment at 59–65 (VMLMPDD) is required for interaction with PIP5K1A. N6-acetyllysine is present on residues lysine 89 and lysine 145. The interval 288–328 (QEEVECEENDGEEEGESDSTHPIGTPPDSPGNTLNSSPPLA) is disordered. Positions 289 to 304 (EEVECEENDGEEEGES) are enriched in acidic residues.

In terms of assembly, homodimer. Interacts with PIP4K2B; the interaction may regulate localization to the nucleus. Probably interacts with PIP5K1A; the interaction inhibits PIP5K1A kinase activity. In terms of processing, phosphorylated in tyrosines. Phosphorylation is induced by light and increases kinase activity. As to expression, detected in rod photoreceptor cells.

The protein resides in the cell membrane. It localises to the nucleus. It is found in the lysosome. The protein localises to the cytoplasm. Its subcellular location is the photoreceptor inner segment. The protein resides in the cell projection. It localises to the cilium. It is found in the photoreceptor outer segment. The enzyme catalyses a 1,2-diacyl-sn-glycero-3-phospho-(1D-myo-inositol-5-phosphate) + ATP = a 1,2-diacyl-sn-glycero-3-phospho-(1D-myo-inositol-4,5-bisphosphate) + ADP + H(+). It catalyses the reaction 1,2-dihexadecanoyl-sn-glycero-3-phospho-(1D-myo-inositol-5-phosphate) + ATP = 1,2-dihexadecanoyl-sn-glycero-3-phospho-(1D-myo-inositol-4,5-bisphosphate) + ADP + H(+). The catalysed reaction is 1,2-dihexadecanoyl-sn-glycero-3-phospho-(1D-myo-inositol-5-phosphate) + GTP = 1,2-dihexadecanoyl-sn-glycero-3-phospho-(1D-myo-inositol-4,5-bisphosphate) + GDP + H(+). With respect to regulation, in rod outer segments, activated by light. Catalyzes the phosphorylation of phosphatidylinositol 5-phosphate (PtdIns5P) on the fourth hydroxyl of the myo-inositol ring, to form phosphatidylinositol 4,5-bisphosphate (PtdIns(4,5)P2). Has both ATP- and GTP-dependent kinase activities. May exert its function by regulating the levels of PtdIns5P, which functions in the cytosol by increasing AKT activity and in the nucleus signals through ING2. May regulate the pool of cytosolic PtdIns5P in response to the activation of tyrosine phosphorylation. Required for lysosome-peroxisome membrane contacts and intracellular cholesterol transport through modulating peroxisomal PtdIns(4,5)P2 level. In collaboration with PIP4K2B, has a role in mediating autophagy in times of nutrient stress. Required for autophagosome-lysosome fusion and the regulation of cellular lipid metabolism. Negatively regulates insulin signaling through a catalytic-independent mechanism. PIP4Ks interact with PIP5Ks and suppress PIP5K-mediated PtdIns(4,5)P2 synthesis and insulin-dependent conversion to PtdIns(3,4,5)P3. May be involved in thrombopoiesis, and the terminal maturation of megakaryocytes and regulation of their size. The chain is Phosphatidylinositol 5-phosphate 4-kinase type-2 alpha from Mus musculus (Mouse).